Here is a 228-residue protein sequence, read N- to C-terminus: Ureidoacrylate amidohydrolase RutB (228 aa).

The active-site Proton acceptor is the Asp-23. The active site involves Lys-132. The Nucleophile role is filled by Cys-165.

It belongs to the isochorismatase family. RutB subfamily.

The enzyme catalyses (Z)-3-ureidoacrylate + H2O + H(+) = (Z)-3-aminoacrylate + NH4(+) + CO2. It carries out the reaction (Z)-3-ureidoacrylate + H2O = (Z)-3-aminoacrylate + carbamate + H(+). The catalysed reaction is (Z)-2-methylureidoacrylate + H2O + H(+) = (Z)-2-methylaminoacrylate + NH4(+) + CO2. Hydrolyzes ureidoacrylate to form aminoacrylate and carbamate. The carbamate hydrolyzes spontaneously, thereby releasing one of the nitrogen atoms of the pyrimidine ring as ammonia and one of its carbon atoms as CO2. This is Ureidoacrylate amidohydrolase RutB from Agrobacterium fabrum (strain C58 / ATCC 33970) (Agrobacterium tumefaciens (strain C58)).